The following is a 95-amino-acid chain: MSVDQATVRRVAHLARISVREDELGHLQNELNAILEFVEQLADLDVSGVEPLTSVVPVELPMREDVVTDGHCPEKVLANAPDAEGGFFTVPKVVE.

It belongs to the GatC family. In terms of assembly, heterotrimer of A, B and C subunits.

The enzyme catalyses L-glutamyl-tRNA(Gln) + L-glutamine + ATP + H2O = L-glutaminyl-tRNA(Gln) + L-glutamate + ADP + phosphate + H(+). The catalysed reaction is L-aspartyl-tRNA(Asn) + L-glutamine + ATP + H2O = L-asparaginyl-tRNA(Asn) + L-glutamate + ADP + phosphate + 2 H(+). In terms of biological role, allows the formation of correctly charged Asn-tRNA(Asn) or Gln-tRNA(Gln) through the transamidation of misacylated Asp-tRNA(Asn) or Glu-tRNA(Gln) in organisms which lack either or both of asparaginyl-tRNA or glutaminyl-tRNA synthetases. The reaction takes place in the presence of glutamine and ATP through an activated phospho-Asp-tRNA(Asn) or phospho-Glu-tRNA(Gln). The protein is Aspartyl/glutamyl-tRNA(Asn/Gln) amidotransferase subunit C of Xanthobacter autotrophicus (strain ATCC BAA-1158 / Py2).